The following is a 209-amino-acid chain: Large ribosomal subunit protein uL3 (209 aa).

The disordered stretch occupies residues 118 to 151; the sequence is GFQGAIKRHGQSRGPMSHGSRYHRRPGSMGPVAP.

Belongs to the universal ribosomal protein uL3 family. Part of the 50S ribosomal subunit. Forms a cluster with proteins L14 and L19.

One of the primary rRNA binding proteins, it binds directly near the 3'-end of the 23S rRNA, where it nucleates assembly of the 50S subunit. The chain is Large ribosomal subunit protein uL3 from Enterococcus faecalis (strain ATCC 700802 / V583).